The sequence spans 970 residues: Pentatricopeptide repeat-containing protein At1g18485 (970 aa).

PPR repeat units follow at residues 119–149 (DDVL…LRSK), 150–185 (NLFQ…DLLP), 186–220 (DHFT…GLVE), 221–251 (DVFV…MPER), 252–282 (NLVS…MMEE), 291–325 (DVAT…RLDK), 326–356 (ELVL…NNNK), 357–391 (NVVS…GEDV), 394–428 (DEVT…EFVY), 429–459 (NELV…IRSK), 460–494 (TVNS…GLLP), 495–529 (DSFT…WLER), 530–560 (DLFV…MEDK), 561–595 (SLVS…GIQL), 597–630 (GISM…LLED), 631–661 (DAFI…LKEK), 662–696 (STAS…GHNP), 697–727 (DDLT…MKSS), and 733–764 (NLKH…MSEE). Positions 770–845 (WKSLLSSCRI…AGCSWIELNR (76 aa)) are type E motif. A type E(+) motif region spans residues 846–875 (KVFSFVVGERFLDGFEEIKSLWSILEMKIS). A type DYW motif region spans residues 876–970 (KMGYRPDTMS…NGVCSCGDYW (95 aa)).

This sequence belongs to the PPR family. PCMP-H subfamily.

This Arabidopsis thaliana (Mouse-ear cress) protein is Pentatricopeptide repeat-containing protein At1g18485 (PCMP-H8).